The chain runs to 523 residues: GMP synthase [glutamine-hydrolyzing] (523 aa).

A Glutamine amidotransferase type-1 domain is found at 8–205 (RILILDFGSQ…IRELCECEAL (198 aa)). The Nucleophile role is filled by Cys85. Active-site residues include His179 and Glu181. The GMPS ATP-PPase domain occupies 206–398 (WTPSNIISDA…LGLPYDMVYR (193 aa)). 233–239 (SGGVDSS) contributes to the ATP binding site.

As to quaternary structure, homodimer.

It catalyses the reaction XMP + L-glutamine + ATP + H2O = GMP + L-glutamate + AMP + diphosphate + 2 H(+). It participates in purine metabolism; GMP biosynthesis; GMP from XMP (L-Gln route): step 1/1. Its function is as follows. Catalyzes the synthesis of GMP from XMP. The chain is GMP synthase [glutamine-hydrolyzing] from Alcanivorax borkumensis (strain ATCC 700651 / DSM 11573 / NCIMB 13689 / SK2).